The sequence spans 280 residues: ESX-1 secretion-associated protein EspJ (280 aa).

Serine 70 is modified (phosphoserine). Low complexity-rich tracts occupy residues 167–181 and 246–280; these read QTIS…QSAQ and PAQA…TTTL. The interval 167 to 280 is disordered; the sequence is QTISQTAQQA…TPAPSTTTTL (114 aa).

Post-translationally, phosphorylated at Ser-70.

The protein resides in the secreted. Its function is as follows. Could be involved in regulation of growth and intracellular survival. The polypeptide is ESX-1 secretion-associated protein EspJ (Mycobacterium tuberculosis (strain CDC 1551 / Oshkosh)).